Reading from the N-terminus, the 629-residue chain is Phosphomethylpyrimidine synthase (629 aa).

The segment covering 1–13 has biased composition (polar residues); sequence MTTKSKNAINLSD. Residues 1-22 form a disordered region; the sequence is MTTKSKNAINLSDSAKVDEQSV. Residues asparagine 233, methionine 262, tyrosine 291, histidine 327, 347-349, 388-391, and glutamate 427 contribute to the substrate site; these read SRG and DGLR. Position 431 (histidine 431) interacts with Zn(2+). Residue tyrosine 454 coordinates substrate. Position 495 (histidine 495) interacts with Zn(2+). [4Fe-4S] cluster is bound by residues cysteine 575, cysteine 578, and cysteine 583.

It belongs to the ThiC family. In terms of assembly, homodimer. It depends on [4Fe-4S] cluster as a cofactor.

The catalysed reaction is 5-amino-1-(5-phospho-beta-D-ribosyl)imidazole + S-adenosyl-L-methionine = 4-amino-2-methyl-5-(phosphooxymethyl)pyrimidine + CO + 5'-deoxyadenosine + formate + L-methionine + 3 H(+). It functions in the pathway cofactor biosynthesis; thiamine diphosphate biosynthesis. Functionally, catalyzes the synthesis of the hydroxymethylpyrimidine phosphate (HMP-P) moiety of thiamine from aminoimidazole ribotide (AIR) in a radical S-adenosyl-L-methionine (SAM)-dependent reaction. This Pseudomonas fluorescens (strain Pf0-1) protein is Phosphomethylpyrimidine synthase.